Consider the following 348-residue polypeptide: Putative 4-hydroxythreonine-4-phosphate dehydrogenase 2 (348 aa).

3 residues coordinate a divalent metal cation: His180, His224, and His279.

Belongs to the PdxA family. As to quaternary structure, homodimer. The cofactor is Zn(2+). Mg(2+) serves as cofactor. Requires Co(2+) as cofactor.

The protein resides in the cytoplasm. It carries out the reaction 4-(phosphooxy)-L-threonine + NAD(+) = 3-amino-2-oxopropyl phosphate + CO2 + NADH. It participates in cofactor biosynthesis; pyridoxine 5'-phosphate biosynthesis; pyridoxine 5'-phosphate from D-erythrose 4-phosphate: step 4/5. Its function is as follows. Catalyzes the NAD(P)-dependent oxidation of 4-(phosphooxy)-L-threonine (HTP) into 2-amino-3-oxo-4-(phosphooxy)butyric acid which spontaneously decarboxylates to form 3-amino-2-oxopropyl phosphate (AHAP). The chain is Putative 4-hydroxythreonine-4-phosphate dehydrogenase 2 from Rhizobium meliloti (strain 1021) (Ensifer meliloti).